Reading from the N-terminus, the 543-residue chain is ATP synthase subunit alpha (543 aa).

174–181 serves as a coordination point for ATP; it reads GDRQTGKT. The tract at residues 521-543 is disordered; the sequence is VEKKPDVDKAAPVDQEKIVAGEK.

It belongs to the ATPase alpha/beta chains family. In terms of assembly, F-type ATPases have 2 components, CF(1) - the catalytic core - and CF(0) - the membrane proton channel. CF(1) has five subunits: alpha(3), beta(3), gamma(1), delta(1), epsilon(1). CF(0) has three main subunits: a(1), b(2) and c(9-12). The alpha and beta chains form an alternating ring which encloses part of the gamma chain. CF(1) is attached to CF(0) by a central stalk formed by the gamma and epsilon chains, while a peripheral stalk is formed by the delta and b chains.

It is found in the cell membrane. It catalyses the reaction ATP + H2O + 4 H(+)(in) = ADP + phosphate + 5 H(+)(out). Functionally, produces ATP from ADP in the presence of a proton gradient across the membrane. The alpha chain is a regulatory subunit. The sequence is that of ATP synthase subunit alpha from Bifidobacterium longum (strain DJO10A).